The primary structure comprises 424 residues: Tyrosine--tRNA ligase (424 aa).

Tyr37 lines the L-tyrosine pocket. The short motif at 42–51 (PTADSLHLGH) is the 'HIGH' region element. L-tyrosine-binding residues include Tyr175 and Gln179. Positions 235–239 (KFGKT) match the 'KMSKS' region motif. Lys238 lines the ATP pocket. Positions 357–414 (ADLMQALVDAELQPSRGQARKTIASNAVTINGEKQSDPEYIFNDEDRLFGRYTLLRRG) constitute an S4 RNA-binding domain.

It belongs to the class-I aminoacyl-tRNA synthetase family. TyrS type 1 subfamily. In terms of assembly, homodimer.

The protein localises to the cytoplasm. The enzyme catalyses tRNA(Tyr) + L-tyrosine + ATP = L-tyrosyl-tRNA(Tyr) + AMP + diphosphate + H(+). In terms of biological role, catalyzes the attachment of tyrosine to tRNA(Tyr) in a two-step reaction: tyrosine is first activated by ATP to form Tyr-AMP and then transferred to the acceptor end of tRNA(Tyr). The chain is Tyrosine--tRNA ligase from Salmonella enteritidis PT4 (strain P125109).